A 659-amino-acid polypeptide reads, in one-letter code: ATP-binding cassette sub-family D member 3 (659 aa).

The tract at residues 1–61 (MAAFSKYLTA…GKKERAVVDK (61 aa)) is interaction with PEX19. An N-linked (GlcNAc...) asparagine glycan is attached at N12. N6-acetyllysine is present on K61. The helical transmembrane segment at 84-104 (GYLLLIAVMLVSRTYCDVWMI) threads the bilayer. The ABC transmembrane type-1 domain maps to 85-372 (YLLLIAVMLV…MLLRMSQALG (288 aa)). A glycan (N-linked (GlcNAc...) asparagine) is linked at N106. Residues 126 to 146 (LFNFIAAMPLISLVNNFLKYG) form a helical membrane-spanning segment. A glycan (N-linked (GlcNAc...) asparagine) is linked at N206. The helical transmembrane segment at 224-244 (AIGAQGPASMMAYLLVSGLFL) threads the bilayer. The residue at position 260 (K260) is an N6-acetyllysine. Residues 313–333 (MGFIDSIIAKYVATVVGYLVV) traverse the membrane as a helical segment. N6-acetyllysine is present on K399. The residue at position 424 (S424) is a Phosphoserine. The ABC transporter domain maps to 434 to 659 (INTDNIIKFD…ITEDTVEFGS (226 aa)). 473-480 (GPNGCGKS) serves as a coordination point for ATP. The residue at position 533 (K533) is an N6-acetyllysine. At S659 the chain carries Phosphoserine.

This sequence belongs to the ABC transporter superfamily. ABCD family. Peroxisomal fatty acyl CoA transporter (TC 3.A.1.203) subfamily. As to quaternary structure, homodimers. Can form heterodimers with ABCD1 and ABCD2. Dimerization is necessary to form an active transporter. Interacts with PEX19; mediates the targeting of ABCD3 to peroxisomes. Post-translationally, ubiquitinated by PEX2 during pexophagy in response to starvation, leading to its degradation.

Its subcellular location is the peroxisome membrane. The catalysed reaction is a very long-chain fatty acyl-CoA + H2O = a very long-chain fatty acid + CoA + H(+). It catalyses the reaction a very long-chain fatty acid(in) + ATP + H2O = a very long-chain fatty acid(out) + ADP + phosphate + H(+). The enzyme catalyses a long-chain fatty acyl-CoA + H2O = a long-chain fatty acid + CoA + H(+). It carries out the reaction a long-chain fatty acid(in) + ATP + H2O = a long-chain fatty acid(out) + ADP + phosphate + H(+). The catalysed reaction is pristanoyl-CoA + H2O = 2,6,10,14-tetramethylpentadecanoate + CoA + H(+). It catalyses the reaction 2,6,10,14-tetramethylpentadecanoate(in) + ATP + H2O = 2,6,10,14-tetramethylpentadecanoate(out) + ADP + phosphate + H(+). The enzyme catalyses hexadecanedioyl-CoA + H2O = hexadecanedioate + CoA + H(+). It carries out the reaction hexadecanedioate(in) + ATP + H2O = hexadecanedioate(out) + ADP + phosphate + H(+). The catalysed reaction is (5Z,8Z,11Z,14Z,17Z)-eicosapentaenoyl-CoA + H2O = (5Z,8Z,11Z,14Z,17Z)-eicosapentaenoate + CoA + H(+). It catalyses the reaction (5Z,8Z,11Z,14Z,17Z)-eicosapentaenoate(in) + ATP + H2O = (5Z,8Z,11Z,14Z,17Z)-eicosapentaenoate(out) + ADP + phosphate + H(+). The enzyme catalyses (4Z,7Z,10Z,13Z,16Z,19Z)-docosahexaenoyl-CoA + H2O = (4Z,7Z,10Z,13Z,16Z,19Z)-docosahexaenoate + CoA + H(+). It carries out the reaction (4Z,7Z,10Z,13Z,16Z,19Z)-docosahexaenoate(in) + ATP + H2O = (4Z,7Z,10Z,13Z,16Z,19Z)-docosahexaenoate(out) + ADP + phosphate + H(+). Functionally, broad substrate specificity ATP-dependent transporter of the ATP-binding cassette (ABC) family that catalyzes the transport of long-chain fatty acids (LCFA)-CoA, dicarboxylic acids-CoA, long-branched-chain fatty acids-CoA and bile acids from the cytosol to the peroxisome lumen for beta-oxydation. Has fatty acyl-CoA thioesterase and ATPase activities. Probably hydrolyzes fatty acyl-CoAs into free fatty acids prior to their ATP-dependent transport into peroxisomes. Thus, play a role in regulation of LCFAs and energy metabolism namely, in the degradation and biosynthesis of fatty acids by beta-oxidation. The sequence is that of ATP-binding cassette sub-family D member 3 (Abcd3) from Mus musculus (Mouse).